A 146-amino-acid chain; its full sequence is 3-hydroxyacyl-[acyl-carrier-protein] dehydratase FabZ (146 aa).

Residue His-48 is part of the active site.

The protein belongs to the thioester dehydratase family. FabZ subfamily.

The protein resides in the cytoplasm. It carries out the reaction a (3R)-hydroxyacyl-[ACP] = a (2E)-enoyl-[ACP] + H2O. Functionally, involved in unsaturated fatty acids biosynthesis. Catalyzes the dehydration of short chain beta-hydroxyacyl-ACPs and long chain saturated and unsaturated beta-hydroxyacyl-ACPs. This chain is 3-hydroxyacyl-[acyl-carrier-protein] dehydratase FabZ, found in Acetivibrio thermocellus (strain ATCC 27405 / DSM 1237 / JCM 9322 / NBRC 103400 / NCIMB 10682 / NRRL B-4536 / VPI 7372) (Clostridium thermocellum).